The sequence spans 292 residues: Diaminopimelate epimerase (292 aa).

The substrate site is built by N13, Q46, and N66. C75 serves as the catalytic Proton donor. Substrate is bound by residues 76–77 (GN), N166, N199, and 217–218 (ER). The active-site Proton acceptor is the C226. 227 to 228 (GT) contributes to the substrate binding site.

Belongs to the diaminopimelate epimerase family. Homodimer.

The protein resides in the cytoplasm. It carries out the reaction (2S,6S)-2,6-diaminopimelate = meso-2,6-diaminopimelate. The protein operates within amino-acid biosynthesis; L-lysine biosynthesis via DAP pathway; DL-2,6-diaminopimelate from LL-2,6-diaminopimelate: step 1/1. Its function is as follows. Catalyzes the stereoinversion of LL-2,6-diaminopimelate (L,L-DAP) to meso-diaminopimelate (meso-DAP), a precursor of L-lysine and an essential component of the bacterial peptidoglycan. The sequence is that of Diaminopimelate epimerase from Ralstonia nicotianae (strain ATCC BAA-1114 / GMI1000) (Ralstonia solanacearum).